The primary structure comprises 236 residues: Pyridoxine 5'-phosphate synthase (236 aa).

Asparagine 6 lines the 3-amino-2-oxopropyl phosphate pocket. Residue 8 to 9 (DH) coordinates 1-deoxy-D-xylulose 5-phosphate. Arginine 17 serves as a coordination point for 3-amino-2-oxopropyl phosphate. Histidine 42 acts as the Proton acceptor in catalysis. 1-deoxy-D-xylulose 5-phosphate-binding residues include arginine 44 and histidine 49. The active-site Proton acceptor is the glutamate 69. 1-deoxy-D-xylulose 5-phosphate is bound at residue threonine 99. Residue histidine 192 is the Proton donor of the active site. 3-amino-2-oxopropyl phosphate is bound by residues glycine 193 and 216-217 (GH).

It belongs to the PNP synthase family. Homooctamer; tetramer of dimers.

Its subcellular location is the cytoplasm. The enzyme catalyses 3-amino-2-oxopropyl phosphate + 1-deoxy-D-xylulose 5-phosphate = pyridoxine 5'-phosphate + phosphate + 2 H2O + H(+). The protein operates within cofactor biosynthesis; pyridoxine 5'-phosphate biosynthesis; pyridoxine 5'-phosphate from D-erythrose 4-phosphate: step 5/5. Its function is as follows. Catalyzes the complicated ring closure reaction between the two acyclic compounds 1-deoxy-D-xylulose-5-phosphate (DXP) and 3-amino-2-oxopropyl phosphate (1-amino-acetone-3-phosphate or AAP) to form pyridoxine 5'-phosphate (PNP) and inorganic phosphate. In Aquifex pyrophilus, this protein is Pyridoxine 5'-phosphate synthase.